Consider the following 263-residue polypeptide: Putative 2-aminoethylphosphonate transport system permease protein PhnV (263 aa).

The next 6 membrane-spanning stretches (helical) occupy residues 13–33 (GVVA…VILM), 69–89 (LTIG…AALA), 104–124 (VFYL…LVAF), 131–151 (MNGT…AFTF), 185–205 (LPLL…LSMG), and 233–253 (NIAD…LLMM). Residues 65–253 (LLASLTIGFC…LVAITLLLMM (189 aa)) form the ABC transmembrane type-1 domain.

Belongs to the binding-protein-dependent transport system permease family.

Its subcellular location is the cell inner membrane. In terms of biological role, probably part of the PhnSTUV complex (TC 3.A.1.11.5) involved in 2-aminoethylphosphonate import. Probably responsible for the translocation of the substrate across the membrane. The sequence is that of Putative 2-aminoethylphosphonate transport system permease protein PhnV (phnV) from Salmonella typhi.